The sequence spans 155 residues: SsrA-binding protein (155 aa).

It belongs to the SmpB family.

It is found in the cytoplasm. Its function is as follows. Required for rescue of stalled ribosomes mediated by trans-translation. Binds to transfer-messenger RNA (tmRNA), required for stable association of tmRNA with ribosomes. tmRNA and SmpB together mimic tRNA shape, replacing the anticodon stem-loop with SmpB. tmRNA is encoded by the ssrA gene; the 2 termini fold to resemble tRNA(Ala) and it encodes a 'tag peptide', a short internal open reading frame. During trans-translation Ala-aminoacylated tmRNA acts like a tRNA, entering the A-site of stalled ribosomes, displacing the stalled mRNA. The ribosome then switches to translate the ORF on the tmRNA; the nascent peptide is terminated with the 'tag peptide' encoded by the tmRNA and targeted for degradation. The ribosome is freed to recommence translation, which seems to be the essential function of trans-translation. This Streptococcus pneumoniae (strain P1031) protein is SsrA-binding protein.